A 114-amino-acid chain; its full sequence is uncharacterized protein (114 aa).

The next 3 membrane-spanning stretches (helical) occupy residues 21–41 (LASSLLISFSSFLFISSVCLF), 65–85 (GCFSSSFLSLSCLMSTLSALI), and 93–113 (LSVFTVVVSASLGSVFTILTD).

It localises to the membrane. This is an uncharacterized protein from Saccharomyces cerevisiae (strain ATCC 204508 / S288c) (Baker's yeast).